Consider the following 342-residue polypeptide: Hypoxia responsive morphology factor C (342 aa).

The Bipartite nuclear localization signal motif lies at 46-68; the sequence is RMKIPRRKSEYSSHDRLKRARKI. The segment at 151–181 is RNA recognition motif (RRM)-like domain; it reads ADDAWAYNAADMDTAVKFFSEAIYKAIESSP.

The protein belongs to the hrmA family.

Its subcellular location is the nucleus. Functionally, probably modulates the generation of the hypoxia-typic morphotype (called H-MORPH) with altered biofilm architecture that leads to increased host inflammation, rapid disease progression, and mortality in a murine model of invasive aspergillosis. This Aspergillus fumigatus (strain CBS 144.89 / FGSC A1163 / CEA10) (Neosartorya fumigata) protein is Hypoxia responsive morphology factor C.